Here is a 621-residue protein sequence, read N- to C-terminus: 1-deoxy-D-xylulose-5-phosphate synthase (621 aa).

Thiamine diphosphate contacts are provided by residues histidine 80 and 121–123; that span reads GHS. Residue aspartate 152 coordinates Mg(2+). Residues 153–154, asparagine 181, tyrosine 288, and glutamate 370 contribute to the thiamine diphosphate site; that span reads GA. Position 181 (asparagine 181) interacts with Mg(2+).

The protein belongs to the transketolase family. DXPS subfamily. As to quaternary structure, homodimer. Mg(2+) is required as a cofactor. The cofactor is thiamine diphosphate.

The catalysed reaction is D-glyceraldehyde 3-phosphate + pyruvate + H(+) = 1-deoxy-D-xylulose 5-phosphate + CO2. The protein operates within metabolic intermediate biosynthesis; 1-deoxy-D-xylulose 5-phosphate biosynthesis; 1-deoxy-D-xylulose 5-phosphate from D-glyceraldehyde 3-phosphate and pyruvate: step 1/1. Catalyzes the acyloin condensation reaction between C atoms 2 and 3 of pyruvate and glyceraldehyde 3-phosphate to yield 1-deoxy-D-xylulose-5-phosphate (DXP). In Erwinia tasmaniensis (strain DSM 17950 / CFBP 7177 / CIP 109463 / NCPPB 4357 / Et1/99), this protein is 1-deoxy-D-xylulose-5-phosphate synthase.